A 381-amino-acid polypeptide reads, in one-letter code: Creatine kinase M-type (381 aa).

Residues 11–98 (KLNYKPQEEY…FDPIIQDRHG (88 aa)) enclose the Phosphagen kinase N-terminal domain. The region spanning 125 to 367 (YVLSSRVRTG…KLMVEMEKKL (243 aa)) is the Phosphagen kinase C-terminal domain. 128–132 (SSRVR) provides a ligand contact to ATP. Ser-164 carries the phosphoserine modification. The residue at position 166 (Thr-166) is a Phosphothreonine. Ser-178 carries the phosphoserine modification. Thr-180 is modified (phosphothreonine). His-191 contacts ATP. Ser-199 is modified (phosphoserine). The ATP site is built by Arg-236 and Arg-292. Residues Thr-313 and Thr-322 each carry the phosphothreonine modification. Residues 320–325 (RGTGGV) and Asp-335 contribute to the ATP site. A Phosphoserine modification is found at Ser-372.

This sequence belongs to the ATP:guanido phosphotransferase family. As to quaternary structure, dimer of identical or non-identical chains, which can be either B (brain type) or M (muscle type). With MM being the major form in skeletal muscle and myocardium, MB existing in myocardium, and BB existing in many tissues, especially brain.

It localises to the cytoplasm. The catalysed reaction is creatine + ATP = N-phosphocreatine + ADP + H(+). Reversibly catalyzes the transfer of phosphate between ATP and various phosphogens (e.g. creatine phosphate). Creatine kinase isoenzymes play a central role in energy transduction in tissues with large, fluctuating energy demands, such as skeletal muscle, heart, brain and spermatozoa. In Mus musculus (Mouse), this protein is Creatine kinase M-type (Ckm).